Consider the following 435-residue polypeptide: Adenylosuccinate synthetase (435 aa).

GTP contacts are provided by residues 12-18 and 40-42; these read GDEGKGK and GHT. Aspartate 13 functions as the Proton acceptor in the catalytic mechanism. Residues aspartate 13 and glycine 40 each contribute to the Mg(2+) site. Residues 13-16, 38-41, threonine 130, arginine 144, glutamine 224, threonine 239, and arginine 301 contribute to the IMP site; these read DEGK and NAGH. The active-site Proton donor is histidine 41. Residue 297–303 participates in substrate binding; that stretch reads TVSNRKR. GTP is bound by residues arginine 303, 329–331, and 411–413; these read KLD and SAG.

The protein belongs to the adenylosuccinate synthetase family. In terms of assembly, homodimer. Mg(2+) is required as a cofactor.

It is found in the cytoplasm. It catalyses the reaction IMP + L-aspartate + GTP = N(6)-(1,2-dicarboxyethyl)-AMP + GDP + phosphate + 2 H(+). The protein operates within purine metabolism; AMP biosynthesis via de novo pathway; AMP from IMP: step 1/2. In terms of biological role, plays an important role in the de novo pathway of purine nucleotide biosynthesis. Catalyzes the first committed step in the biosynthesis of AMP from IMP. In Wolbachia sp. subsp. Brugia malayi (strain TRS), this protein is Adenylosuccinate synthetase.